The sequence spans 294 residues: Acetylglutamate kinase (294 aa).

Residues 66 to 67 (GG), arginine 88, and asparagine 193 contribute to the substrate site.

Belongs to the acetylglutamate kinase family. ArgB subfamily.

The protein resides in the cytoplasm. The catalysed reaction is N-acetyl-L-glutamate + ATP = N-acetyl-L-glutamyl 5-phosphate + ADP. It functions in the pathway amino-acid biosynthesis; L-arginine biosynthesis; N(2)-acetyl-L-ornithine from L-glutamate: step 2/4. In terms of biological role, catalyzes the ATP-dependent phosphorylation of N-acetyl-L-glutamate. In Agrobacterium fabrum (strain C58 / ATCC 33970) (Agrobacterium tumefaciens (strain C58)), this protein is Acetylglutamate kinase.